The chain runs to 855 residues: Oxysterol-binding protein-related protein 3 (855 aa).

Residues M1–D32 are disordered. A phosphoserine mark is found at S15 and S33. Low complexity predominate over residues S15–Q31. In terms of domain architecture, PH spans P50–M145. The FFAT 1 motif lies at F161–V167. A phosphoserine mark is found at S199, S250, S272, S277, S288, S291, S340, S393, S405, and S408. A disordered region spans residues P274–A293. The interval D377–E396 is disordered. The FFAT 2 motif lies at L450–N454. A disordered region spans residues P468–N490.

This sequence belongs to the OSBP family. As to quaternary structure, homodimer. Interacts with RRAS. Interacts (phosphorylated form) with VAPA. Interacts with OSBPL6. In terms of processing, phosphorylation is enhanced in vitro by phorbol-12-myristate-13-acetate (PMA), forskolin and calcium ionophore A23187. Phosphorylation seems to be stimulated in conditions of low cell-cell (or cell-matrix) adhesion. In terms of tissue distribution, expressed in spinal ganglia. Expressed in a subset of small lymphocytes (at protein level).

The protein resides in the endoplasmic reticulum membrane. It localises to the cytoplasm. The protein localises to the cytosol. Its subcellular location is the cell membrane. It is found in the cell projection. The protein resides in the filopodium tip. It localises to the nucleus membrane. Phosphoinositide-binding protein which associates with both cell and endoplasmic reticulum (ER) membranes. Can bind to the ER membrane protein VAPA and recruit VAPA to plasma membrane sites, thus linking these intracellular compartments. The ORP3-VAPA complex stimulates RRAS signaling which in turn attenuates integrin beta-1 (ITGB1) activation at the cell surface. With VAPA, may regulate ER morphology. Has a role in regulation of the actin cytoskeleton, cell polarity and cell adhesion. Binds to phosphoinositides with preference for PI(3,4)P2 and PI(3,4,5)P3. Also binds 25-hydroxycholesterol and cholesterol. This is Oxysterol-binding protein-related protein 3 (Osbpl3) from Mus musculus (Mouse).